A 370-amino-acid polypeptide reads, in one-letter code: 3-isopropylmalate dehydrogenase 2 (370 aa).

Residue 77–90 (GPKWDAVPYEVRPE) participates in NAD(+) binding. Substrate contacts are provided by R97, R107, R135, and D226. Mg(2+) contacts are provided by D226, D250, and D254. 290 to 302 (GSAPDIAGKGLAN) is an NAD(+) binding site.

Belongs to the isocitrate and isopropylmalate dehydrogenases family. LeuB type 1 subfamily. In terms of assembly, homodimer. Mg(2+) is required as a cofactor. It depends on Mn(2+) as a cofactor.

It is found in the cytoplasm. The catalysed reaction is (2R,3S)-3-isopropylmalate + NAD(+) = 4-methyl-2-oxopentanoate + CO2 + NADH. It participates in amino-acid biosynthesis; L-leucine biosynthesis; L-leucine from 3-methyl-2-oxobutanoate: step 3/4. In terms of biological role, catalyzes the oxidation of 3-carboxy-2-hydroxy-4-methylpentanoate (3-isopropylmalate) to 3-carboxy-4-methyl-2-oxopentanoate. The product decarboxylates to 4-methyl-2 oxopentanoate. This chain is 3-isopropylmalate dehydrogenase 2, found in Bradyrhizobium diazoefficiens (strain JCM 10833 / BCRC 13528 / IAM 13628 / NBRC 14792 / USDA 110).